A 1066-amino-acid chain; its full sequence is Bifunctional cytochrome P450/NADPH--P450 reductase (1066 aa).

The interval 1–480 is cytochrome P450; that stretch reads MAESVPIPEP…LAGNGATSSS (480 aa). Heme is bound at residue cysteine 407. Residues 481 to 1066 form an NADPH-P-450 reductase region; the sequence is THNIKAAANL…NERFATDVFD (586 aa). A Flavodoxin-like domain is found at 500–641; that stretch reads MAIFYGSNSG…DFEAWEDIVL (142 aa). Residues 506–511, 554–557, cysteine 588, and threonine 596 each bind FMN; these read SNSGTC and SYEG. The FAD-binding FR-type domain occupies 676-904; that stretch reads QDVEEALVVA…RASSEAFHLP (229 aa).

It in the N-terminal section; belongs to the cytochrome P450 family. The cofactor is FAD. Requires FMN as cofactor. Heme serves as cofactor.

It is found in the membrane. It carries out the reaction an organic molecule + reduced [NADPH--hemoprotein reductase] + O2 = an alcohol + oxidized [NADPH--hemoprotein reductase] + H2O + H(+). It catalyses the reaction 2 oxidized [cytochrome P450] + NADPH = 2 reduced [cytochrome P450] + NADP(+) + H(+). With respect to regulation, stimulated NADPH--cytochrome reductase activity in the presence of substrate. Inhibited by fatty acid substrates longer than 13 carbons and the degree of inhibition increases with increasing chain length. Its function is as follows. Functions as a fatty acid monooxygenase. Catalyzes hydroxylation of fatty acids at omega-1, omega-2 and omega-3 positions. Shows activity toward fatty acids with a chain length of 9-18 carbons with optimum chain lengths of 12-14 carbons (lauric, tridecylic and myristic acids). Can also use shorter saturated fatty acids with a chain length of 9 or 10 carbons as substrates. Also displays a NADPH-dependent reductase activity in the C-terminal domain, which allows electron transfer from NADPH to the heme iron of the cytochrome P450 N-terminal domain. The protein is Bifunctional cytochrome P450/NADPH--P450 reductase of Fusarium oxysporum (Fusarium vascular wilt).